A 132-amino-acid polypeptide reads, in one-letter code: Small ribosomal subunit protein uS8 (132 aa).

The protein belongs to the universal ribosomal protein uS8 family. As to quaternary structure, part of the 30S ribosomal subunit. Contacts proteins S5 and S12.

Functionally, one of the primary rRNA binding proteins, it binds directly to 16S rRNA central domain where it helps coordinate assembly of the platform of the 30S subunit. This chain is Small ribosomal subunit protein uS8, found in Staphylococcus haemolyticus (strain JCSC1435).